The chain runs to 308 residues: Putative hydrolase MT0526 (308 aa).

Residues 1 to 48 (MMVSSHLGSPDQAGHVDLASPADPPPPDASASHSPVDMPAPVAAAGSD) are disordered. The active-site Nucleophile is the Asp62. Mg(2+) is bound by residues Asp62, Asp64, and Asp237. Asp64 (proton donor) is an active-site residue.

The protein belongs to the HAD-like hydrolase superfamily. SerB family. The cofactor is Mg(2+).

The sequence is that of Putative hydrolase MT0526 from Mycobacterium tuberculosis (strain CDC 1551 / Oshkosh).